A 178-amino-acid chain; its full sequence is Large ribosomal subunit protein bL17 (178 aa).

It belongs to the bacterial ribosomal protein bL17 family. As to quaternary structure, part of the 50S ribosomal subunit. Contacts protein L32.

The chain is Large ribosomal subunit protein bL17 from Lachnospira eligens (strain ATCC 27750 / DSM 3376 / VPI C15-48 / C15-B4) (Eubacterium eligens).